We begin with the raw amino-acid sequence, 494 residues long: Ketol-acid reductoisomerase (NADP(+)) (494 aa).

The 195-residue stretch at 14 to 208 (LDQLGRCRFM…GGHRAGCLES (195 aa)) folds into the KARI N-terminal Rossmann domain. Residues 45–48 (CGAQ), Arg-68, Arg-76, Ser-78, and 108–110 (DKQ) contribute to the NADP(+) site. Residue His-132 is part of the active site. Residue Gly-158 participates in NADP(+) binding. KARI C-terminal knotted domains lie at 209-344 (SFVA…NYPE) and 345-487 (SDVE…MSDM). Positions 217, 221, 389, and 393 each coordinate Mg(2+). Ser-414 provides a ligand contact to substrate.

It belongs to the ketol-acid reductoisomerase family. It depends on Mg(2+) as a cofactor.

It catalyses the reaction (2R)-2,3-dihydroxy-3-methylbutanoate + NADP(+) = (2S)-2-acetolactate + NADPH + H(+). The enzyme catalyses (2R,3R)-2,3-dihydroxy-3-methylpentanoate + NADP(+) = (S)-2-ethyl-2-hydroxy-3-oxobutanoate + NADPH + H(+). The protein operates within amino-acid biosynthesis; L-isoleucine biosynthesis; L-isoleucine from 2-oxobutanoate: step 2/4. It functions in the pathway amino-acid biosynthesis; L-valine biosynthesis; L-valine from pyruvate: step 2/4. Functionally, involved in the biosynthesis of branched-chain amino acids (BCAA). Catalyzes an alkyl-migration followed by a ketol-acid reduction of (S)-2-acetolactate (S2AL) to yield (R)-2,3-dihydroxy-isovalerate. In the isomerase reaction, S2AL is rearranged via a Mg-dependent methyl migration to produce 3-hydroxy-3-methyl-2-ketobutyrate (HMKB). In the reductase reaction, this 2-ketoacid undergoes a metal-dependent reduction by NADPH to yield (R)-2,3-dihydroxy-isovalerate. This Aliivibrio fischeri (strain ATCC 700601 / ES114) (Vibrio fischeri) protein is Ketol-acid reductoisomerase (NADP(+)).